The primary structure comprises 878 residues: Lon protease 2 (878 aa).

Positions 85–281 (LYLLPVKERP…KVLSLFKHEI (197 aa)) constitute a Lon N-terminal domain. 434 to 441 (GPPGVGKT) provides a ligand contact to ATP. A Lon proteolytic domain is found at 668–850 (NQQMGTVTGL…DDVAKLTFHI (183 aa)). Catalysis depends on residues Ser756 and Lys799.

Belongs to the peptidase S16 family. In terms of assembly, homohexamer. Organized in a ring with a central cavity.

It is found in the cytoplasm. The enzyme catalyses Hydrolysis of proteins in presence of ATP.. ATP-dependent serine protease that mediates the selective degradation of mutant and abnormal proteins as well as certain short-lived regulatory proteins. Required for cellular homeostasis and for survival from DNA damage and developmental changes induced by stress. Degrades polypeptides processively to yield small peptide fragments that are 5 to 10 amino acids long. Binds to DNA in a double-stranded, site-specific manner. This chain is Lon protease 2, found in Hydrogenovibrio crunogenus (strain DSM 25203 / XCL-2) (Thiomicrospira crunogena).